Consider the following 118-residue polypeptide: Large ribosomal subunit protein uL18 (118 aa).

It belongs to the universal ribosomal protein uL18 family. As to quaternary structure, part of the 50S ribosomal subunit; part of the 5S rRNA/L5/L18/L25 subcomplex. Contacts the 5S and 23S rRNAs.

Its function is as follows. This is one of the proteins that bind and probably mediate the attachment of the 5S RNA into the large ribosomal subunit, where it forms part of the central protuberance. The polypeptide is Large ribosomal subunit protein uL18 (Acidobacterium capsulatum (strain ATCC 51196 / DSM 11244 / BCRC 80197 / JCM 7670 / NBRC 15755 / NCIMB 13165 / 161)).